We begin with the raw amino-acid sequence, 117 residues long: U9-theraphotoxin-Hhn1a (117 aa).

A signal peptide spans 1–21; the sequence is MNTVRVTFLLVFVLAVSLGQA. Positions 22–75 are excised as a propeptide; it reads DEDGNRMEMRQEIEKTEADSSYFAENLLLQKLEELEAKLWEETSEESRNSRQKR. Cystine bridges form between C76-C94, C83-C99, and C93-C114.

The protein belongs to the neurotoxin 14 (magi-1) family. 01 (HNTX-16) subfamily. Expressed by the venom gland.

It localises to the secreted. In terms of biological role, probable ion channel inhibitor. The protein is U9-theraphotoxin-Hhn1a of Cyriopagopus hainanus (Chinese bird spider).